Here is a 401-residue protein sequence, read N- to C-terminus: MANPFSRWFLSERPPNCHVADLETSLDPHQTLLKVQKYKPALSDWVHYIFLGSIMLFVFITNPAPWIFKILFYCFLGTLFIIPATSQFFFNALPILTWVALYFTSSYFPDDRRPPITVKVLPAVETILYGDNLSDILATSTNSFLDILAWLPYGLFHFGAPFVVAAILFVFGPPTVLQGYAFAFGYMNLFGVIMQNVFPAAPPWYKILYGLQSANYDMHGSPGGLARIDKLLGINMYTTAFSNSSVIFGAFPSLHSGCATMEALFFCYCFPKLKPLFIAYVCWLWWSTMYLTHHYFVDLMAGSVLSYVIFQYTKYTHLPIVDTSLFCRWSYTSIEKYDISKSDPLAADSNDIESVPLSNLELDFDLNMTDEPSVSPSLFDGSTSVSRSSATSITSLGVKRA.

Topologically, residues 1–41 (MANPFSRWFLSERPPNCHVADLETSLDPHQTLLKVQKYKPA) are cytoplasmic. Residues 42–62 (LSDWVHYIFLGSIMLFVFITN) form a helical membrane-spanning segment. Residues 63–64 (PA) are Lumenal-facing. Residues 65 to 85 (PWIFKILFYCFLGTLFIIPAT) traverse the membrane as a helical segment. At 86–87 (SQ) the chain is on the cytoplasmic side. A helical transmembrane segment spans residues 88–108 (FFFNALPILTWVALYFTSSYF). Topologically, residues 109–155 (PDDRRPPITVKVLPAVETILYGDNLSDILATSTNSFLDILAWLPYGL) are lumenal. Asn132 carries an N-linked (GlcNAc...) asparagine glycan. A helical membrane pass occupies residues 156 to 176 (FHFGAPFVVAAILFVFGPPTV). Over 177 to 178 (LQ) the chain is Cytoplasmic. The helical transmembrane segment at 179–199 (GYAFAFGYMNLFGVIMQNVFP) threads the bilayer. At 200–245 (AAPPWYKILYGLQSANYDMHGSPGGLARIDKLLGINMYTTAFSNSS) the chain is on the lumenal side. The helical transmembrane segment at 246–266 (VIFGAFPSLHSGCATMEALFF) threads the bilayer. Residues 267–268 (CY) are Cytoplasmic-facing. A helical transmembrane segment spans residues 269–289 (CFPKLKPLFIAYVCWLWWSTM). Over 290-291 (YL) the chain is Lumenal. Residues 292-312 (THHYFVDLMAGSVLSYVIFQY) form a helical membrane-spanning segment. Over 313–401 (TKYTHLPIVD…SITSLGVKRA (89 aa)) the chain is Cytoplasmic. The segment at 374–401 (VSPSLFDGSTSVSRSSATSITSLGVKRA) is disordered. Low complexity predominate over residues 382–395 (STSVSRSSATSITS). 2 positions are modified to phosphoserine: Ser392 and Ser395.

This sequence belongs to the AUR1 family. As to quaternary structure, component of the inositol phosphorylceramide synthase complex composed of at least AUR1 and KEI1.

It is found in the golgi apparatus. It localises to the golgi stack membrane. The enzyme catalyses an N-(2R-hydroxy-very-long-chain fatty acyl)-(R)-4-hydroxysphingoid base + a 1,2-diacyl-sn-glycero-3-phospho-(1D-myo-inositol) = a 1D-myo-inositol-1-phospho-N-[(R)-2-hydroxy-very-long-chain fatty acyl]-(R)-4-hydroxysphingoid base + a 1,2-diacyl-sn-glycerol. With respect to regulation, inhibited by aureobasidin A (AbA), khafrefungin and rustmicin. Its function is as follows. Catalytic component of the inositol phosphorylceramide synthase which catalyzes the addition of a phosphorylinositol group onto ceramide to form inositol phosphorylceramide, an essential step in sphingolipid biosynthesis. The protein is Inositol phosphorylceramide synthase catalytic subunit AUR1 of Saccharomyces cerevisiae (strain ATCC 204508 / S288c) (Baker's yeast).